Consider the following 1004-residue polypeptide: E3 ubiquitin-protein ligase NEDD4-like (1004 aa).

The C2 domain occupies 30–154 (LASHHSRGLE…TEDPTMERPY (125 aa)). Disordered stretches follow at residues 207 to 230 (SNDSASQHQEELPPPPLPPGWEEK) and 272 to 407 (AAHR…TPSV). The WW 1 domain occupies 221 to 254 (PPLPPGWEEKVDNLGRTYYVNHNNRSTQWHRPSL). At Ser341 the chain carries Phosphoserine. A Phosphothreonine modification is found at Thr347. Polar residues-rich tracts occupy residues 347–359 (TPDSNGEQFSSLI) and 366–376 (RLRSCSVTDTV). Ser371 is modified (phosphoserine; by WNK1 and WNK4). Position 396 is a phosphothreonine; by SGK1 (Thr396). The WW 2 domain occupies 414–447 (PGLPSGWEERKDAKGRTYYVNHNNRTTTWTRPIM). Residues 453–523 (GASGSATNSN…YNSPKPQHKV (71 aa)) are disordered. Ser475 bears the Phosphoserine mark. The residue at position 477 (Ser477) is a Phosphoserine; by SGK1. 6 positions are modified to phosphoserine: Ser478, Ser493, Ser504, Ser508, Ser512, and Ser516. Residues 489-500 (GAKDSPIRRAVK) show a composition bias toward basic and acidic residues. WW domains follow at residues 526-559 (SFLPPGWEMRIAPNGRPFFIDHNTKTTTWEDPRL) and 577-610 (GPLPPGWEERIHLDGRTFYIDHNSKITQWEDPRL). The HECT domain occupies 669-1003 (RPDVLKARLW…VENAQGFEGV (335 aa)). Residue Cys971 is the Glycyl thioester intermediate of the active site.

As to quaternary structure, interacts with UBE2E3. Interacts with NDFIP1; this interaction activates the E3 ubiquitin-protein ligase. Interacts with NDFIP2; this interaction activates the E3 ubiquitin-protein ligase. Interacts (via WW domains) with SCN1A. Interacts (via WW domains) with SCN2A. Interacts (via WW domains) with SCN3A. Interacts (via WW domains) with SCN5A. Interacts (via WW domains) with SCN8A. Interacts (via WW domains) with SCN9A. Interacts (via WW domains) with SCN10A. Interacts (via WW domains) with CLCN5. Interacts with SMAD2. Interacts with SMAD3. Interacts with SMAD6. Interacts with SMAD7. The phosphorylated form interacts with 14-3-3 proteins. Interacts with TNK2. Interacts with WNK1. Interacts with SGK1. Interacts (via C2 domain) with NPC2. Interacts with ARRDC4. Interacts with KCNQ1; promotes internalization of KCNQ1. Interacts (via domains WW1, 3 and 4) with USP36; the interaction inhibits ubiquitination of, at least, NTRK1, KCNQ2 and KCNQ3 by NEDD4L. Interacts with PRRG4 (via cytoplasmic domain). Interacts with LDLRAD3; the interaction is direct. Interacts with UBE2D2. Interacts with TTYH2 and TTYH3. Post-translationally, phosphorylated; which impairs interaction with SCNN. Interaction with YWHAH inhibits dephosphorylation. Aldosterone induces Ser-477 phosphorylation by SGK1. Auto-ubiquitinated. Deubiquitinated by USP36, no effect on NEDD4L protein levels. Both proteins interact and regulate each other's ubiquitination levels. In terms of tissue distribution, highly expressed in liver and kidney. Also expressed in heart, brain and lung. Isoform 1 is expressed in kidney, lung and gut. Isoform 3 is ubiquitously expressed.

It localises to the cytoplasm. The protein localises to the golgi apparatus. Its subcellular location is the endosome. It is found in the multivesicular body. It catalyses the reaction S-ubiquitinyl-[E2 ubiquitin-conjugating enzyme]-L-cysteine + [acceptor protein]-L-lysine = [E2 ubiquitin-conjugating enzyme]-L-cysteine + N(6)-ubiquitinyl-[acceptor protein]-L-lysine.. The catalysed reaction is [E2 ubiquitin-conjugating enzyme]-S-ubiquitinyl-L-cysteine + [acceptor protein]-L-cysteine = [E2 ubiquitin-conjugating enzyme]-L-cysteine + [acceptor protein]-S-ubiquitinyl-L-cysteine.. It functions in the pathway protein modification; protein ubiquitination. With respect to regulation, activated by NDFIP1- and NDFIP2-binding. In terms of biological role, E3 ubiquitin-protein ligase that mediates the polyubiquitination of lysine and cysteine residues on target proteins and is thereby implicated in the regulation of various signaling pathways including autophagy, innate immunity or DNA repair. Inhibits TGF-beta signaling by triggering SMAD2 and TGFBR1 ubiquitination and proteasome-dependent degradation. Downregulates autophagy and cell growth by ubiquitinating and reducing cellular ULK1 or ASCT2 levels. Promotes ubiquitination and internalization of various plasma membrane channels such as ENaC, SCN2A/Nav1.2, SCN3A/Nav1.3, SCN5A/Nav1.5, SCN9A/Nav1.7, SCN10A/Nav1.8, KCNA3/Kv1.3, KCNH2, EAAT1, KCNQ2/Kv7.2, KCNQ3/Kv7.3 or CLC5. Promotes ubiquitination and degradation of SGK1 and TNK2. Ubiquitinates BRAT1 and this ubiquitination is enhanced in the presence of NDFIP1. Plays a role in dendrite formation by melanocytes. Involved in the regulation of TOR signaling. Ubiquitinates and regulates protein levels of NTRK1 once this one is activated by NGF. Plays a role in antiviral innate immunity by catalyzing 'Lys-29'-linked cysteine ubiquitination of TRAF3, resulting in enhanced 'Lys-48' and 'Lys-63'-linked ubiquitination of TRAF3. Ubiquitinates TTYH2 and TYYH3 and regulates protein levels of TTYH2. The sequence is that of E3 ubiquitin-protein ligase NEDD4-like (Nedd4l) from Mus musculus (Mouse).